Reading from the N-terminus, the 382-residue chain is Protein NASP homolog 1 (382 aa).

The tract at residues 1-39 (MDTENIADASDIRVKDASGDSDEKGNGTTTEEETVEQKE) is disordered. Over residues 10–25 (SDIRVKDASGDSDEKG) the composition is skewed to basic and acidic residues. A TPR 1 repeat occupies 42–75 (LAELLAAGRRALKVNDIDKASDSLSEATELSSEI). A compositionally biased stretch (basic and acidic residues) spans 103-112 (QLLKGPGEKE). The interval 103–151 (QLLKGPGEKESGDEEQAGNSDDKTDEENGETEKEDGEESGEEEDDDDDT) is disordered. Residues 125-150 (KTDEENGETEKEDGEESGEEEDDDDD) are compositionally biased toward acidic residues. TPR repeat units lie at residues 191 to 224 (ADVL…QRNV) and 233 to 266 (AQTY…LIAR). A coiled-coil region spans residues 264-304 (IARQTELKHELERGVDDKEKKSEFENELKELEEMMPGVEEM). Residues 337 to 382 (PQEAGDQKEANDISSLVRRPAKRAVDAPTDNQAVKKEKEEEGTTSI) are disordered. Positions 369–382 (AVKKEKEEEGTTSI) are enriched in basic and acidic residues.

Belongs to the NASP family. In terms of assembly, may interact with zinc finger protein tra-4 and histone deacetylase hda-1.

The protein resides in the nucleus. Promotes normal hermaphrodite (XX) development, in concert with zinc finger protein tra-4 and histone deacetylase hda-1, perhaps as components of a complex. May act redundantly with nasp-2. Involved in innate immune response to B.thuringiensis strain DB27 and S.aureus bacteria. May play a role in the uptake or spreading of dsRNA. This Caenorhabditis elegans protein is Protein NASP homolog 1.